Here is a 388-residue protein sequence, read N- to C-terminus: Pentatricopeptide repeat-containing protein 2, mitochondrial (388 aa).

A PPR repeat occupies 166–200; it reads TSFNILMDMLFIKGKYKSALQVLIEMKNQDVKFTK. A Phosphoserine modification is found at serine 382.

This sequence belongs to the PTCD2 family.

It is found in the mitochondrion. Functionally, involved in mitochondrial RNA maturation and mitochondrial respiratory chain function. The chain is Pentatricopeptide repeat-containing protein 2, mitochondrial (PTCD2) from Homo sapiens (Human).